Reading from the N-terminus, the 1141-residue chain is MGRLYLIVLGVLITATAGFPRSVHELKIECPHTVVLGQGYVTGSVELGFIALDQVTDLKIESSCSFDHHAAPTTTQNFTQLKWAKTASTTDTTNAAETTFESKSTEVHLKGVCTIPSNVLDGPSRPVTGRKTVVCYDLACNQTHCQPTVHLLAPIQTCMSVRSCMISLLASRIQVVYEKTYCVTGQLIEGLCFNPVPNLALTQPGHTYDTFTLPITCFLVAKKGANLKIAVELEKLTTKTGCAENALQAYYICFIGQHSEPLTVPMLEDYRSAEIFTRIMMNPKGEDHDMEQSSQGALRIVGPIKGKVPPTETSDTVQGIAFAGLPMYSSFSSLVRKAEPEYLFSPGIIAESNHSSCDKKTLPLTWRGFLSMSGEIERITGCNVFCTLAGPGASCEAYSENGIFNISSPTCLVNKVQKFRGSEQRINFISQRIDQDVIVYCNGQKKVILTKTLVIGQCIYTFTSIFSLIPSVAHSLAVELCVPGIHGWATIALVITFCFGWLLIPTTTMVVLKCLRLLTYSCSHYSTESKFKVILEKVKVEYQKTMGSMVCDICHHECETAKELESHKKSCADGQCPYCMTITEATESALQAHYAVCKLTGRFHEALKKSLKKPEVQRGCYRTLGVFRYKSRCYVGLVWMCLLTLELIVWAASADTPLLEPGWSDTAHGVGDIPMKTDLELDFAIPSSSSYSYRRRLVNPANSDETVPFHFQLERQVIHAEIQSLGHWMDATFNIISAFHCYGECKKYSYPWQTAKCFFEKDYQYETSWSCNPPDCPGVGTGCTACGIYLDKLKSVGKAYKVITLKYARKVCIQLGTEQTCKNIDVNDCLVTSSIKVCMIGTISKFQPGDTLLFLGPLEEGGLVLKQWCTTTCSFGDPGDIMSTTSGMRCPEHTGSFRKICGFATTPVCEYQGNTVSGFKRLMATKDSFQSFNVSEVHITTTKLEWSDPDSNIKDHINLILNRDVSFQDLSDNPCKVDLSTQAIDGAWGSGVGFTLTCIVGLTECSSFMTSIKVCDMAMCYGASVVNLVRGSNTVKIVGKGGHSGSTFRCCHDKDCTSNGLLASAPHLERVTGFNQIDSDKVYDDGAPPCSIKCWFAKSGEWLLGILNGNWVVVAVLVIILLISIFLFSFFCPIRSHKKQL.

A signal peptide spans 1–18; it reads MGRLYLIVLGVLITATAG. Over 19 to 483 the chain is Lumenal; that stretch reads FPRSVHELKI…HSLAVELCVP (465 aa). Cystine bridges form between cysteine 30–cysteine 158, cysteine 64–cysteine 164, cysteine 113–cysteine 135, cysteine 140–cysteine 145, cysteine 182–cysteine 192, cysteine 217–cysteine 253, cysteine 242–cysteine 357, cysteine 382–cysteine 441, cysteine 386–cysteine 395, and cysteine 458–cysteine 481. N-linked (GlcNAc...) asparagine; by host glycosylation occurs at asparagine 141. The N-linked (GlcNAc...) asparagine; by host glycan is linked to asparagine 353. Asparagine 405 is a glycosylation site (N-linked (GlcNAc...) asparagine; by host). Residues 484 to 506 traverse the membrane as a helical segment; it reads GIHGWATIALVITFCFGWLLIPT. The Cytoplasmic segment spans residues 507–633; it reads TTMVVLKCLR…LGVFRYKSRC (127 aa). Residues 522–539 form a binding to the ribonucleoprotein region; the sequence is CSHYSTESKFKVILEKVK. 2 CCHC-type zinc fingers span residues 551–571 and 576–597; these read CDIC…KKSC and CPYC…YAVC. Binding to the ribonucleoprotein regions lie at residues 594-611, 598-609, and 617-631; these read YAVC…KKSL, KLTGRFHEALKK, and QRGC…RYKS. Positions 617–640 constitute an ITAM domain; it reads QRGCYRTLGVFRYKSRCYVGLVWM. Tyrosine 621 and tyrosine 634 each carry phosphotyrosine. Residues 621–624 carry the YxxL motif; the sequence is YRTL. A helical membrane pass occupies residues 634-654; sequence YVGLVWMCLLTLELIVWAASA. At 655–1110 the chain is on the lumenal side; sequence DTPLLEPGWS…EWLLGILNGN (456 aa). 8 cysteine pairs are disulfide-bonded: cysteine 741-cysteine 776, cysteine 745-cysteine 783, cysteine 757-cysteine 890, cysteine 771-cysteine 901, cysteine 786-cysteine 909, cysteine 812-cysteine 821, cysteine 829-cysteine 838, and cysteine 869-cysteine 873. Positions 763 to 783 are fusion loop; that stretch reads YQYETSWSCNPPDCPGVGTGC. The N-linked (GlcNAc...) asparagine; by host glycan is linked to asparagine 933. 5 disulfide bridges follow: cysteine 975–cysteine 1005, cysteine 998–cysteine 1050, cysteine 1015–cysteine 1020, cysteine 1051–cysteine 1056, and cysteine 1090–cysteine 1094. A helical transmembrane segment spans residues 1111–1131; that stretch reads WVVVAVLVIILLISIFLFSFF. Residues 1127–1141 are binding to the ribonucleoprotein; it reads LFSFFCPIRSHKKQL. Residues 1132–1141 lie on the Cytoplasmic side of the membrane; that stretch reads CPIRSHKKQL.

It belongs to the hantavirus envelope glycoprotein family. Homodimer. Homotetramer; forms heterotetrameric Gn-Gc spikes in the pre-fusion conformation. Interacts (via C-terminus) with the nucleoprotein. Interacts with host TUFM; this interaction contributes to the virus-induced degradation of mitochondria by autophagy, which leads to degradation of host MAVS and inhibition of type I interferon (IFN) responses. Interacts with host MAP1LC3B; this interaction contributes to the virus-induced degradation of mitochondria by autophagy, which leads to degradation of host MAVS and inhibition of type I interferon (IFN) responses. In terms of assembly, homodimer. Homotetramer; forms heterotetrameric Gn-Gc spikes in the pre-fusion conformation. Homotrimer; forms homotrimer in the post-fusion conformation at acidic pH. Interacts (via C-terminus) with the nucleoprotein. Envelope polyprotein precursor is quickly cleaved in vivo just after synthesis, presumably by host signal peptidase.

The protein localises to the virion membrane. It is found in the host cell surface. The protein resides in the host Golgi apparatus membrane. It localises to the host endoplasmic reticulum membrane. Its subcellular location is the host mitochondrion. In terms of biological role, forms homotetramers with glycoprotein C at the surface of the virion. Attaches the virion to host cell receptors including integrin ITGAV/ITGB3. This attachment induces virion internalization predominantly through clathrin-dependent endocytosis. Mediates the assembly and budding of infectious virus particles through its interaction with the nucleocapsid protein and the viral genome. May dysregulate normal immune and endothelial cell responses through an ITAM motif. Translocates to mitochondria, binds to host TUFM and recruits MAP1LC3B. These interactions induce mitochondrial autophagy and therefore destruction of host MAVS leading to inhibition of type I interferon (IFN) responses. Concomitant breakdown of glycoprotein N is apparently prevented by the nucleoprotein that may inhibit Gn-stimulated autophagosome-lysosome fusion. Interacts with the viral genomic RNA. Its function is as follows. Forms homotetramers with glycoprotein N at the surface of the virion. Attaches the virion to host cell receptors including integrin ITGAV/ITGB3. This attachment induces virion internalization predominantly through clathrin-dependent endocytosis. Class II fusion protein that promotes fusion of viral membrane with host endosomal membrane after endocytosis of the virion. The chain is Envelopment polyprotein (GP) from Homo sapiens (Human).